The sequence spans 1280 residues: Ankyrin repeat and sterile alpha motif domain-containing protein 1B (1280 aa).

7 ANK repeats span residues 2 to 31, 57 to 86, 90 to 119, 126 to 155, 159 to 188, 192 to 221, and 224 to 253; these read GKEQ…GLLG, SGYT…STNV, KGCF…SHSR, EKET…DPSM, RGET…NLMS, RKHT…DVNT, and EKGS…DANI. Disordered regions lie at residues 299 to 322, 361 to 399, 479 to 573, 704 to 723, and 755 to 791; these read RHRP…LRHK, MESF…EEKS, SVSD…STGS, NGEA…SNTG, and SNLV…PSFT. Residues 482 to 491 show a composition bias toward basic and acidic residues; sequence DAERGNHGDD. 3 stretches are compositionally biased toward polar residues: residues 520–550, 707–723, and 770–782; these read KQRT…SSLG, ARSN…SNTG, and SRGQ…SSPS. 2 SAM domains span residues 824–890 and 898–963; these read CPVQ…LPRV and NNPT…RLHE. Disordered stretches follow at residues 960-994 and 1208-1243; these read RLHE…LSQA and GSST…MDQK. Residues 980–994 are compositionally biased toward polar residues; that stretch reads GNHTPPQLSPSLSQA. The region spanning 1071-1223 is the PID domain; sequence IFQSCDYEAY…ESFDSKPSKP (153 aa).

It is found in the cytoplasm. The protein is Ankyrin repeat and sterile alpha motif domain-containing protein 1B (anks1b) of Danio rerio (Zebrafish).